Reading from the N-terminus, the 261-residue chain is Transmembrane protein 187 (261 aa).

6 helical membrane passes run 8 to 28 (AFVHVAVAGGLCAVAVFTGIF), 43 to 63 (APVAGLPAFLAMPFNSLVNMA), 88 to 108 (VFAAMALLYGPVQWLRLWTQW), 113 to 133 (VLDQWLTLPIFAWPVAWCLYL), 140 to 162 (WLFLSLECVSLASYGLALLHPQG), and 190 to 210 (SATYLALGVLSCLGFVVLKLC).

As to expression, ubiquitous.

The protein resides in the membrane. This Homo sapiens (Human) protein is Transmembrane protein 187 (TMEM187).